The sequence spans 171 residues: Co-chaperone protein HscB (171 aa).

One can recognise a J domain in the interval 2-74 (DYFTLFGLPA…LTRAEYLLSL (73 aa)).

The protein belongs to the HscB family. As to quaternary structure, interacts with HscA and stimulates its ATPase activity. Interacts with IscU.

Functionally, co-chaperone involved in the maturation of iron-sulfur cluster-containing proteins. Seems to help targeting proteins to be folded toward HscA. This chain is Co-chaperone protein HscB, found in Salmonella arizonae (strain ATCC BAA-731 / CDC346-86 / RSK2980).